The following is a 226-amino-acid chain: Lipoprotein-releasing system ATP-binding protein LolD 1 (226 aa).

Residues 5–225 (LKLDGIRKSY…IVRVVDGKIA (221 aa)) form the ABC transporter domain. An ATP-binding site is contributed by 42–49 (GPSGSGKS).

Belongs to the ABC transporter superfamily. Lipoprotein translocase (TC 3.A.1.125) family. In terms of assembly, the complex is composed of two ATP-binding proteins (LolD) and two transmembrane proteins (LolC and LolE).

Its subcellular location is the cell inner membrane. In terms of biological role, part of the ABC transporter complex LolCDE involved in the translocation of mature outer membrane-directed lipoproteins, from the inner membrane to the periplasmic chaperone, LolA. Responsible for the formation of the LolA-lipoprotein complex in an ATP-dependent manner. This chain is Lipoprotein-releasing system ATP-binding protein LolD 1, found in Rhodopseudomonas palustris (strain ATCC BAA-98 / CGA009).